Reading from the N-terminus, the 122-residue chain is Putative protein adenylyltransferase MJ1547 (122 aa).

The GSX(10)DXD motif motif lies at 11–25 (GSYAKNEYTKRSDID). Mg(2+)-binding residues include Asp-23, Asp-25, and Asp-48.

This sequence belongs to the MntA antitoxin family. As to quaternary structure, probably forms a complex with cognate toxin MJ1548. Requires Mg(2+) as cofactor.

It catalyses the reaction L-tyrosyl-[protein] + ATP = O-(5'-adenylyl)-L-tyrosyl-[protein] + diphosphate. The enzyme catalyses O-(5'-adenylyl)-L-tyrosyl-[protein] + ATP = O-[5'-(adenylyl-(5'-&gt;3')-adenylyl)]-L-tyrosyl-[protein] + diphosphate. Functionally, probable antitoxin component of a putative type VII toxin-antitoxin (TA) system. Neutralizes cognate toxic MJ1548 by di-AMPylation. This chain is Putative protein adenylyltransferase MJ1547, found in Methanocaldococcus jannaschii (strain ATCC 43067 / DSM 2661 / JAL-1 / JCM 10045 / NBRC 100440) (Methanococcus jannaschii).